Reading from the N-terminus, the 876-residue chain is Alanine--tRNA ligase (876 aa).

The Zn(2+) site is built by H563, H567, C665, and H669.

The protein belongs to the class-II aminoacyl-tRNA synthetase family. The cofactor is Zn(2+).

It is found in the cytoplasm. It catalyses the reaction tRNA(Ala) + L-alanine + ATP = L-alanyl-tRNA(Ala) + AMP + diphosphate. Its function is as follows. Catalyzes the attachment of alanine to tRNA(Ala) in a two-step reaction: alanine is first activated by ATP to form Ala-AMP and then transferred to the acceptor end of tRNA(Ala). Also edits incorrectly charged Ser-tRNA(Ala) and Gly-tRNA(Ala) via its editing domain. This Shouchella clausii (strain KSM-K16) (Alkalihalobacillus clausii) protein is Alanine--tRNA ligase.